A 152-amino-acid chain; its full sequence is Transposase for insertion sequence element IS200 (152 aa).

2 residues coordinate Mg(2+): His61 and His63. The active-site Nucleophile is the Tyr125. Gln129 contributes to the Mg(2+) binding site.

It belongs to the transposase 17 family. In terms of assembly, homodimer. It depends on Mg(2+) as a cofactor.

Functionally, transposase responsible for transposition of the IS200 insertion sequence (IS) element. Transposition occurs in 2 main steps, excision from the donor DNA 'top strand' into a single strand circle and its subsequent reinsertion into the DNA target. This increases the copy number of the IS. In Salmonella typhi, this protein is Transposase for insertion sequence element IS200 (tnpA1).